The following is a 310-amino-acid chain: Upstream stimulatory factor 1 (310 aa).

The span at 1–17 (MKGQQKTAETEEGTVQI) shows a compositional bias: polar residues. Disordered stretches follow at residues 1-26 (MKGQ…ATGE) and 171-209 (QGGS…EVER). The span at 190 to 209 (EAPRTTRDEKRRAQHNEVER) shows a compositional bias: basic and acidic residues. One can recognise a bHLH domain in the interval 199-254 (KRRAQHNEVERRRRDKINNWIVQLSKIIPDCSMESTKSGQSKGGILSKACDYIQEL). The tract at residues 271-292 (LQLDNDVLRQQVEDLKNKNLLL) is leucine-zipper. Residue Lys-306 forms a Glycyl lysine isopeptide (Lys-Gly) (interchain with G-Cter in SUMO2) linkage.

In terms of assembly, efficient DNA binding requires dimerization with another bHLH protein. Binds DNA as a homodimer or a heterodimer (USF1/USF2).

It is found in the nucleus. Transcription factor that binds to a symmetrical DNA sequence (E-boxes) (5'-CACGTG-3') that is found in a variety of viral and cellular promoters. The protein is Upstream stimulatory factor 1 (Usf1) of Mus musculus (Mouse).